Reading from the N-terminus, the 114-residue chain is Neurotrophic factor BDNF precursor form (114 aa).

3 disulfide bridges follow: Cys-14–Cys-81, Cys-59–Cys-110, and Cys-69–Cys-112.

It belongs to the NGF-beta family.

It is found in the secreted. Its function is as follows. Promotes the survival of neuronal populations that are all located either in the central nervous system or directly connected to it. This chain is Neurotrophic factor BDNF precursor form (bdnf), found in Xenopus laevis (African clawed frog).